Consider the following 378-residue polypeptide: UPF0754 membrane protein BCE_0952 (378 aa).

2 helical membrane-spanning segments follow: residues 1–21 and 357–377; these read MNIW…GGFT and YLGA…LLFL.

This sequence belongs to the UPF0754 family.

Its subcellular location is the cell membrane. This Bacillus cereus (strain ATCC 10987 / NRS 248) protein is UPF0754 membrane protein BCE_0952.